The sequence spans 150 residues: MKIRGFEVVTKYKNAGINIPKRSTEHSAGYDIEAAETVSFAPGEIKLIPTGLKAYMQAGEVLYMYDRSSNPRKKGLVLINSVGVIDKDYYNNPDNEGHMFMQMRNFTDEEVVIEKGERVVQGVFMPFLVADGDENQEKEERTGGFGSTGA.

Residues 67–69, asparagine 80, and 84–86 each bind substrate; these read RSS and VID.

Belongs to the dUTPase family. The cofactor is Mg(2+).

The enzyme catalyses dUTP + H2O = dUMP + diphosphate + H(+). Its pathway is pyrimidine metabolism; dUMP biosynthesis; dUMP from dCTP (dUTP route): step 2/2. In terms of biological role, this enzyme is involved in nucleotide metabolism: it produces dUMP, the immediate precursor of thymidine nucleotides and it decreases the intracellular concentration of dUTP so that uracil cannot be incorporated into DNA. In Lactococcus lactis subsp. lactis (strain IL1403) (Streptococcus lactis), this protein is Deoxyuridine 5'-triphosphate nucleotidohydrolase (dut).